An 80-amino-acid polypeptide reads, in one-letter code: Cell division activator CedA (80 aa).

The protein belongs to the CedA family.

Activates the cell division inhibited by chromosomal DNA over-replication. The protein is Cell division activator CedA of Escherichia coli O139:H28 (strain E24377A / ETEC).